We begin with the raw amino-acid sequence, 220 residues long: MKTYKIAVDGPAASGKSSTSDLVARKLGFSHLISGNLYRAVTYGLVRRFGEVRPGDEEQKRFVLELSIEVRNNRVFLDGEDVSESLRKEVVDRHVVSVAREKYIREKVFTIQRSVIDLEKRGIVVDGRDIATRIMPNADLKVFLTASPETRARRRYMEGGSESYEELLESIKKRDHNDRTREHDPLVATCDSIVIENDSMTLEETADEIIRLFRRVESFN.

10–18 (GPAASGKSS) is an ATP binding site.

The protein belongs to the cytidylate kinase family. Type 1 subfamily.

It carries out the reaction CMP + ATP = CDP + ADP. It catalyses the reaction dCMP + ATP = dCDP + ADP. This chain is Probable cytidylate kinase, found in Encephalitozoon cuniculi (strain GB-M1) (Microsporidian parasite).